The sequence spans 1401 residues: Bifunctional 3'-5' exonuclease/ATP-dependent helicase WRN (1401 aa).

An interaction with WRNIP1 region spans residues 1-271 (METTSLQRKF…FPVTCRNLET (271 aa)). The KBM 1 signature appears at 6–18 (LQRKFPEWMSMQS). The 3'-5' exonuclease domain maps to 51 to 223 (YEASDCSFLS…GLIIYQKLGN (173 aa)). Positions 76 and 78 each coordinate Zn(2+). Lys148 is covalently cross-linked (Glycyl lysine isopeptide (Lys-Gly) (interchain with G-Cter in SUMO2)). Asp210 provides a ligand contact to Zn(2+). Residues Lys235 and Lys246 each participate in a glycyl lysine isopeptide (Lys-Gly) (interchain with G-Cter in SUMO2) cross-link. Residues 401–427 (QAKEEKYNDVSHQLSEHLSPNDDENDS) are disordered. Phosphoserine occurs at positions 419, 433, and 444. A disordered region spans residues 464-492 (GTNGRLPPEEEDGHGNEAIKEEQEEEDHL). The 167-residue stretch at 522–688 (HSVLEERRDN…ISCLNLKDPQ (167 aa)) folds into the Helicase ATP-binding domain. Position 535–542 (535–542 (MATGYGKS)) interacts with ATP. A DEAH box motif is present at residues 632–635 (DEAH). The Helicase C-terminal domain maps to 713-866 (DLKPFLVRKA…KLKMMVKMEK (154 aa)). 4 residues coordinate Zn(2+): Cys873, Cys900, Cys901, and Cys904. The interaction with DNA stretch occupies residues 952–958 (RGSNSQR). The disordered stretch occupies residues 1041 to 1106 (LLPSSNPVSP…PSPGTSSSPL (66 aa)). Over residues 1043 to 1069 (PSSNPVSPETTQHSSNQNPAGLTTKQS) the composition is skewed to polar residues. A compositionally biased stretch (basic and acidic residues) spans 1070-1081 (NLERTHSYKVPE). Phosphoserine is present on Ser1098. Residues 1115-1194 (LDARTGLYAR…KHFCQVTSVQ (80 aa)) form the HRDC domain. Residues 1323–1332 (GSDSRTQPPC) are compositionally biased toward polar residues. Residues 1323–1401 (GSDSRTQPPC…AKTKKKGLFS (79 aa)) form a disordered region. Over residues 1348 to 1358 (ESCKESKEAVT) the composition is skewed to basic and acidic residues. The residue at position 1364 (Ser1364) is a Phosphoserine. The KBM 2 signature appears at 1367–1376 (SKRKLPEWFA). The span at 1382–1392 (SADTGSSSSMA) shows a compositional bias: polar residues. The short motif at 1388 to 1401 (SSSMAKTKKKGLFS) is the XLM element.

This sequence belongs to the helicase family. RecQ subfamily. As to quaternary structure, monomer, and homooligomer. May exist as homodimer, homotrimer, homotetramer and/or homohexamer. Homotetramer, or homohexamer, when bound to DNA. Interacts via its N-terminal domain with WRNIP1. Interacts with EXO1, PCNA and SUPV3L1. Interacts with PML (isoform PML-4). Interacts (via KBM motif) with XRCC5 and XRCC6; promoting recruitment to DNA damage sites. Interacts with RECQL5; this interaction stimulates WRN helicase activity on DNA fork duplexes. Requires Zn(2+) as cofactor. The cofactor is Mn(2+). Post-translationally, phosphorylated by PRKDC. In terms of tissue distribution, expressed ubiquitously in most organs at a low level, highly expressed in testis, ovary and spleen.

It is found in the nucleus. Its subcellular location is the nucleolus. The protein resides in the nucleoplasm. It localises to the chromosome. It carries out the reaction Couples ATP hydrolysis with the unwinding of duplex DNA by translocating in the 3'-5' direction.. The catalysed reaction is ATP + H2O = ADP + phosphate + H(+). With respect to regulation, zinc ions stimulate the exonuclease activity. Multifunctional enzyme that has magnesium and ATP-dependent 3'-5' DNA-helicase activity. Has 3'-&gt;5' exonuclease activity on forked dsDNA. Has no nuclease activity towards single-stranded DNA or blunt-ended double-stranded DNA. Binds preferentially to DNA substrates containing alternate secondary structures, such as replication forks and Holliday junctions. May play an important role in the dissociation of joint DNA molecules that can arise as products of homologous recombination, at stalled replication forks or during DNA repair. Alleviates stalling of DNA polymerases at the site of DNA lesions. Unwinds some G-quadruplex DNA. Plays a role in the formation of DNA replication focal centers; stably associates with foci elements generating binding sites for RP-A. Plays a role in double-strand break repair after gamma-irradiation. The chain is Bifunctional 3'-5' exonuclease/ATP-dependent helicase WRN (Wrn) from Mus musculus (Mouse).